The sequence spans 328 residues: DNA-directed RNA polymerase subunit alpha (328 aa).

The interval 1-235 is alpha N-terminal domain (alpha-NTD); the sequence is MQGSVTEFLK…EQLDAFVDLR (235 aa). Residues 249-328 are alpha C-terminal domain (alpha-CTD); that stretch reads FDPILLRPVD…ENWPPASLAE (80 aa).

Belongs to the RNA polymerase alpha chain family. Homodimer. The RNAP catalytic core consists of 2 alpha, 1 beta, 1 beta' and 1 omega subunit. When a sigma factor is associated with the core the holoenzyme is formed, which can initiate transcription.

It carries out the reaction RNA(n) + a ribonucleoside 5'-triphosphate = RNA(n+1) + diphosphate. DNA-dependent RNA polymerase catalyzes the transcription of DNA into RNA using the four ribonucleoside triphosphates as substrates. The polypeptide is DNA-directed RNA polymerase subunit alpha (Pseudoalteromonas translucida (strain TAC 125)).